The primary structure comprises 427 residues: Glutamate-1-semialdehyde 2,1-aminomutase (427 aa).

Residue K265 is modified to N6-(pyridoxal phosphate)lysine.

The protein belongs to the class-III pyridoxal-phosphate-dependent aminotransferase family. HemL subfamily. As to quaternary structure, homodimer. Pyridoxal 5'-phosphate is required as a cofactor.

The protein localises to the cytoplasm. The catalysed reaction is (S)-4-amino-5-oxopentanoate = 5-aminolevulinate. It participates in porphyrin-containing compound metabolism; protoporphyrin-IX biosynthesis; 5-aminolevulinate from L-glutamyl-tRNA(Glu): step 2/2. In Bordetella petrii (strain ATCC BAA-461 / DSM 12804 / CCUG 43448), this protein is Glutamate-1-semialdehyde 2,1-aminomutase.